Consider the following 176-residue polypeptide: Tubulin polymerization-promoting protein family member 3 (176 aa).

The interval 126 to 152 is disordered; the sequence is TDTSKYTGSHKERFDESGKGKGKGGRE. Residues 134–152 show a composition bias toward basic and acidic residues; sequence SHKERFDESGKGKGKGGRE.

The protein belongs to the TPPP family.

It localises to the cytoplasm. The protein localises to the cytoskeleton. In terms of biological role, regulator of microtubule dynamic that has microtubule bundling activity. The chain is Tubulin polymerization-promoting protein family member 3 (tppp3) from Xenopus tropicalis (Western clawed frog).